Reading from the N-terminus, the 170-residue chain is Phosphopantetheine adenylyltransferase (170 aa).

Residue Thr-9 participates in substrate binding. ATP contacts are provided by residues 9 to 10 (TF) and His-17. 3 residues coordinate substrate: Lys-41, Leu-73, and Arg-87. Residues 88–90 (GLR), Glu-98, and 123–129 (YQFISGT) each bind ATP.

Belongs to the bacterial CoaD family. Homohexamer. Requires Mg(2+) as cofactor.

Its subcellular location is the cytoplasm. It carries out the reaction (R)-4'-phosphopantetheine + ATP + H(+) = 3'-dephospho-CoA + diphosphate. It functions in the pathway cofactor biosynthesis; coenzyme A biosynthesis; CoA from (R)-pantothenate: step 4/5. In terms of biological role, reversibly transfers an adenylyl group from ATP to 4'-phosphopantetheine, yielding dephospho-CoA (dPCoA) and pyrophosphate. This chain is Phosphopantetheine adenylyltransferase, found in Bordetella petrii (strain ATCC BAA-461 / DSM 12804 / CCUG 43448).